The chain runs to 383 residues: Decapping nuclease RAI1 (383 aa).

Glu166 contacts a divalent metal cation. Glu215 contacts substrate. Positions 217, 235, and 236 each coordinate a divalent metal cation. Lys237 and Gln261 together coordinate substrate.

Belongs to the DXO/Dom3Z family. In terms of assembly, interacts with RAT1; the interaction is direct, stabilizes RAT1 protein structure and stimulates its exoribonuclease activity. The interaction also stimulates RAI1 pyrophosphohydrolase activity, probably by recruiting it to mRNA substrates. A divalent metal cation is required as a cofactor.

The protein resides in the nucleus. The catalysed reaction is a 5'-end NAD(+)-phospho-ribonucleoside in mRNA + H2O = a 5'-end phospho-ribonucleoside in mRNA + NAD(+) + H(+). The enzyme catalyses a 5'-end (N(7)-methyl 5'-triphosphoguanosine)-ribonucleoside-ribonucleotide in mRNA + H2O = a (N(7)-methyl 5'-triphosphoguanosine)-nucleoside + a 5'-end phospho-ribonucleoside in mRNA + H(+). It carries out the reaction a 5'-end triphospho-ribonucleoside in mRNA + H2O = a 5'-end phospho-ribonucleoside in mRNA + diphosphate + H(+). In terms of biological role, decapping enzyme for NAD-capped RNAs: specifically hydrolyzes the nicotinamide adenine dinucleotide (NAD) cap from a subset of RNAs by removing the entire NAD moiety from the 5'-end of an NAD-capped RNA. The NAD-cap is present at the 5'-end of some RNAs and snoRNAs. In contrast to the canonical 5'-end N7 methylguanosine (m7G) cap, the NAD cap promotes mRNA decay. Also acts as a non-canonical decapping enzyme that removes the entire cap structure of m7G capped or incompletely capped RNAs. Has decapping activity toward incomplete 5'-end m7G cap mRNAs such as unmethylated 5'-end-capped RNA (cap0), while it has no activity toward 2'-O-ribose methylated m7G cap (cap1). Also possesses RNA 5'-pyrophosphohydrolase activity by hydrolyzing the 5'-end triphosphate to release pyrophosphates. Stimulates exoribonuclease activity of Rat1, allowing it to degrade RNAs with stable secondary structure more effectively. The polypeptide is Decapping nuclease RAI1 (Lachancea thermotolerans (strain ATCC 56472 / CBS 6340 / NRRL Y-8284) (Yeast)).